The primary structure comprises 172 residues: MKLGIVIFPSKMIQDKANGLRKRYDPHYALVPPHITLKTPFETQDEQLESIVNELHTIASKTNPFTLHVGKVGSFAPVNNVIYFKVEKTPELTFLNEEMHSGFFTQEREYAFVPHLTIGQGLSDAEHADVLGRLRMKDFYYEQPIDRFHLLYQLENGTWTVHETFRLGKGNN.

The Proton donor role is filled by His-34. 2 short sequence motifs (HXTX) span residues 34 to 37 (HITL) and 115 to 118 (HLTI). His-115 serves as the catalytic Proton acceptor.

This sequence belongs to the 2H phosphoesterase superfamily. YjcG family.

The polypeptide is Putative phosphoesterase BT9727_1129 (Bacillus thuringiensis subsp. konkukian (strain 97-27)).